We begin with the raw amino-acid sequence, 349 residues long: Inositol-tetrakisphosphate 1-kinase 2 (349 aa).

K48 and K90 together coordinate 1D-myo-inositol 1,3,4-trisphosphate. Residues R125 and K175 each contribute to the ATP site. 2 residues coordinate 1D-myo-inositol 1,3,4-trisphosphate: H186 and K218. ATP is bound by residues 207–218 (QEFVNHGGILFK) and S233. Mg(2+) contacts are provided by D298, D313, and N315. Position 315 (N315) interacts with 1D-myo-inositol 1,3,4-trisphosphate.

It belongs to the ITPK1 family. As to quaternary structure, monomer. Mg(2+) is required as a cofactor.

It carries out the reaction 1D-myo-inositol 3,4,5,6-tetrakisphosphate + ATP = 1D-myo-inositol 1,3,4,5,6-pentakisphosphate + ADP + H(+). The enzyme catalyses 1D-myo-inositol 1,3,4-trisphosphate + ATP = 1D-myo-inositol 1,3,4,5-tetrakisphosphate + ADP + H(+). The catalysed reaction is 1D-myo-inositol 1,3,4-trisphosphate + ATP = 1D-myo-inositol 1,3,4,6-tetrakisphosphate + ADP + H(+). Kinase that can phosphorylate various inositol polyphosphate such as Ins(3,4,5,6)P4 or Ins(1,3,4)P3 and participates in phytic acid biosynthesis in developing seeds. Phytic acid is the primary storage form of phosphorus in cereal grains and other plant seeds. This is Inositol-tetrakisphosphate 1-kinase 2 (ITPK2) from Oryza sativa subsp. indica (Rice).